The primary structure comprises 267 residues: Acyl-[acyl-carrier-protein]--UDP-N-acetylglucosamine O-acyltransferase (267 aa).

This sequence belongs to the transferase hexapeptide repeat family. LpxA subfamily. In terms of assembly, homotrimer.

It is found in the cytoplasm. The enzyme catalyses a (3R)-hydroxyacyl-[ACP] + UDP-N-acetyl-alpha-D-glucosamine = a UDP-3-O-[(3R)-3-hydroxyacyl]-N-acetyl-alpha-D-glucosamine + holo-[ACP]. Its pathway is glycolipid biosynthesis; lipid IV(A) biosynthesis; lipid IV(A) from (3R)-3-hydroxytetradecanoyl-[acyl-carrier-protein] and UDP-N-acetyl-alpha-D-glucosamine: step 1/6. In terms of biological role, involved in the biosynthesis of lipid A, a phosphorylated glycolipid that anchors the lipopolysaccharide to the outer membrane of the cell. This Hamiltonella defensa subsp. Acyrthosiphon pisum (strain 5AT) protein is Acyl-[acyl-carrier-protein]--UDP-N-acetylglucosamine O-acyltransferase.